A 197-amino-acid chain; its full sequence is Peptide deformylase (197 aa).

Fe cation is bound by residues Cys-106 and His-148. Residue Glu-149 is part of the active site. His-152 is a binding site for Fe cation.

The protein belongs to the polypeptide deformylase family. The cofactor is Fe(2+).

It catalyses the reaction N-terminal N-formyl-L-methionyl-[peptide] + H2O = N-terminal L-methionyl-[peptide] + formate. Removes the formyl group from the N-terminal Met of newly synthesized proteins. Requires at least a dipeptide for an efficient rate of reaction. N-terminal L-methionine is a prerequisite for activity but the enzyme has broad specificity at other positions. The protein is Peptide deformylase of Mycolicibacterium paratuberculosis (strain ATCC BAA-968 / K-10) (Mycobacterium paratuberculosis).